Here is a 1393-residue protein sequence, read N- to C-terminus: Protein strawberry notch homolog 1 (1393 aa).

Positions 129–148 (STRPSVSAPTVRNAMTSAPS) are disordered. S148 bears the Phosphoserine mark. K149 carries the N6-acetyllysine modification. A phosphoserine mark is found at S162 and S214. The residue at position 413 (K413) is an N6-acetyllysine. Residues 687–840 (APSNNSSPRD…ANSNTNSNSS (154 aa)) form a disordered region. Phosphoserine occurs at positions 692, 693, and 697. The span at 697–716 (SPCKENKIKKRKGEEITREA) shows a compositional bias: basic and acidic residues. Acidic residues predominate over residues 733–747 (SGSESDASDNEESDY). S754, S755, and S768 each carry phosphoserine. Residues 756 to 775 (GDDDDFNPFLDESNEDDEND) show a composition bias toward acidic residues. Positions 781–793 (KDHKKNKEKKKKK) are enriched in basic residues. A phosphoserine mark is found at S794 and S815. A compositionally biased stretch (low complexity) spans 824 to 840 (PAPNSTPANSNTNSNSS). Positions 843-870 (TSQDAVERAQQMKKDLLDKLEKLAEDLP) form a coiled coil. The residue at position 1222 (K1222) is an N6-acetyllysine. S1386 is subject to Phosphoserine.

This sequence belongs to the SBNO family.

It localises to the nucleus. Its function is as follows. Plays a crucial role in the regulation of neural stem cells (NSCs) proliferation. Enhances the phosphorylation of GSK3B through the PI3K-Akt signaling pathway, thereby upregulating the Wnt/beta-catenin signaling pathway and promoting the proliferation of NSCs. Improves ischemic stroke recovery while inhibiting neuroinflammation through small extracellular vesicles (sEVs)-mediated mechanism. Enhances the secretion of sEVs from NSCs, which in turn inhibit both the MAPK and NF-kappaB pathways in microglia. This inhibition suppresses the pro-inflammatory M1 polarization of microglia, promoting a shift towards the M2 anti-inflammatory phenotype, which is beneficial for reducing neuroinflammation. This Homo sapiens (Human) protein is Protein strawberry notch homolog 1 (SBNO1).